A 137-amino-acid polypeptide reads, in one-letter code: DNA-binding protein H-NS (137 aa).

A coiled-coil region spans residues 13 to 65 (TLRAQARECTLETLEEMLEKLEVVVNERREEESAAAAEVEERTRKLQQYREML). Residues 112-117 (QGRTPA) mediate DNA binding.

This sequence belongs to the histone-like protein H-NS family. In terms of assembly, homodimer that oligomerizes on DNA into higher-order complexes that form bridges between disparate regions of DNA compacting it. Interacts with Hha, YdgT and StpA.

Its subcellular location is the cytoplasm. It localises to the nucleoid. In terms of biological role, a DNA-binding protein implicated in transcriptional repression and chromosome organization and compaction. Binds AT-rich DNA, repressing its transcription; about 754/4438 tested genes (15%) bind to H-NS, 70% of these are AT-rich and correspond to horizontally transferred geness (HTG), thus playing a central role in silencing foreign genes. This offers the selective advantage of silencing foreign DNA. Binds nucleation sites in AT-rich DNA and bridges them, forming higher-order nucleoprotein complexes and condensing the chromosome. A subset of genes are repressed by H-NS in association with Hha and/or YdgT. In Salmonella typhimurium (strain 14028s / SGSC 2262), this protein is DNA-binding protein H-NS (hns).